Reading from the N-terminus, the 344-residue chain is UDP-N-acetylenolpyruvoylglucosamine reductase (344 aa).

The FAD-binding PCMH-type domain maps to 15–185 (LPACANQIIE…ISVGLKLAKA (171 aa)). Arginine 161 is a catalytic residue. Serine 231 functions as the Proton donor in the catalytic mechanism. The active site involves glutamate 327.

It belongs to the MurB family. FAD is required as a cofactor.

The protein localises to the cytoplasm. It catalyses the reaction UDP-N-acetyl-alpha-D-muramate + NADP(+) = UDP-N-acetyl-3-O-(1-carboxyvinyl)-alpha-D-glucosamine + NADPH + H(+). It functions in the pathway cell wall biogenesis; peptidoglycan biosynthesis. Cell wall formation. The protein is UDP-N-acetylenolpyruvoylglucosamine reductase of Haemophilus ducreyi (strain 35000HP / ATCC 700724).